A 123-amino-acid polypeptide reads, in one-letter code: Large ribosomal subunit protein uL14 (123 aa).

Belongs to the universal ribosomal protein uL14 family. Part of the 50S ribosomal subunit. Forms a cluster with proteins L3 and L19. In the 70S ribosome, L14 and L19 interact and together make contacts with the 16S rRNA in bridges B5 and B8.

Its function is as follows. Binds to 23S rRNA. Forms part of two intersubunit bridges in the 70S ribosome. The sequence is that of Large ribosomal subunit protein uL14 from Proteus mirabilis (strain HI4320).